The chain runs to 129 residues: Large ribosomal subunit protein uL22 (129 aa).

It belongs to the universal ribosomal protein uL22 family. In terms of assembly, part of the 50S ribosomal subunit.

This protein binds specifically to 23S rRNA; its binding is stimulated by other ribosomal proteins, e.g. L4, L17, and L20. It is important during the early stages of 50S assembly. It makes multiple contacts with different domains of the 23S rRNA in the assembled 50S subunit and ribosome. Its function is as follows. The globular domain of the protein is located near the polypeptide exit tunnel on the outside of the subunit, while an extended beta-hairpin is found that lines the wall of the exit tunnel in the center of the 70S ribosome. This Metamycoplasma hominis (strain ATCC 23114 / DSM 25592 / NBRC 14850 / NCTC 10111 / PG21) (Mycoplasma hominis) protein is Large ribosomal subunit protein uL22.